The following is a 1218-amino-acid chain: Coatomer subunit alpha-1 (1218 aa).

WD repeat units lie at residues 7-48 (TKSN…DRFD), 49-88 (EHDG…CLFT), 91-132 (GHLD…AVLT), 133-172 (GHNH…KKTV), 202-241 (GHDR…AWEV), 246-285 (GHMN…GIQT), 288-326 (REHD…PAFS), 363-404 (SLNQ…AGRA), and 450-489 (PLPI…GELQ). The disordered stretch occupies residues 857–882 (NGGDGFDAEEGEANEEDGEEGGWDLE). The span at 862-882 (FDAEEGEANEEDGEEGGWDLE) shows a compositional bias: acidic residues.

In terms of assembly, oligomeric complex that consists of at least the alpha, beta, beta', gamma, delta, epsilon and zeta subunits.

Its subcellular location is the cytoplasm. The protein resides in the golgi apparatus membrane. The protein localises to the cytoplasmic vesicle. It is found in the COPI-coated vesicle membrane. The coatomer is a cytosolic protein complex that binds to dilysine motifs and reversibly associates with Golgi non-clathrin-coated vesicles, which further mediate biosynthetic protein transport from the ER, via the Golgi up to the trans Golgi network. Coatomer complex is required for budding from Golgi membranes, and is essential for the retrograde Golgi-to-ER transport of dilysine-tagged proteins. This chain is Coatomer subunit alpha-1, found in Oryza sativa subsp. japonica (Rice).